A 270-amino-acid polypeptide reads, in one-letter code: Formamidopyrimidine-DNA glycosylase (270 aa).

The active-site Schiff-base intermediate with DNA is Pro-2. Glu-3 functions as the Proton donor in the catalytic mechanism. The active-site Proton donor; for beta-elimination activity is the Lys-58. DNA contacts are provided by His-91, Arg-110, and Arg-151. An FPG-type zinc finger spans residues 236-270 (LVYGRDGLPCPNCGRALKHATIGQRASVWCSHCQR). Arg-260 (proton donor; for delta-elimination activity) is an active-site residue.

It belongs to the FPG family. As to quaternary structure, monomer. The cofactor is Zn(2+).

It catalyses the reaction Hydrolysis of DNA containing ring-opened 7-methylguanine residues, releasing 2,6-diamino-4-hydroxy-5-(N-methyl)formamidopyrimidine.. The catalysed reaction is 2'-deoxyribonucleotide-(2'-deoxyribose 5'-phosphate)-2'-deoxyribonucleotide-DNA = a 3'-end 2'-deoxyribonucleotide-(2,3-dehydro-2,3-deoxyribose 5'-phosphate)-DNA + a 5'-end 5'-phospho-2'-deoxyribonucleoside-DNA + H(+). Its function is as follows. Involved in base excision repair of DNA damaged by oxidation or by mutagenic agents. Acts as a DNA glycosylase that recognizes and removes damaged bases. Has a preference for oxidized purines, such as 7,8-dihydro-8-oxoguanine (8-oxoG). Has AP (apurinic/apyrimidinic) lyase activity and introduces nicks in the DNA strand. Cleaves the DNA backbone by beta-delta elimination to generate a single-strand break at the site of the removed base with both 3'- and 5'-phosphates. This chain is Formamidopyrimidine-DNA glycosylase, found in Stenotrophomonas maltophilia (strain R551-3).